The following is a 251-amino-acid chain: Probable transcriptional regulatory protein cauri_1421 (251 aa).

Residues 1–21 are disordered; that stretch reads MAGHSKWATTKHKKAANDAKR.

Belongs to the TACO1 family.

The protein resides in the cytoplasm. The sequence is that of Probable transcriptional regulatory protein cauri_1421 from Corynebacterium aurimucosum (strain ATCC 700975 / DSM 44827 / CIP 107346 / CN-1) (Corynebacterium nigricans).